We begin with the raw amino-acid sequence, 648 residues long: Serine/threonine-protein phosphatase 1 regulatory subunit PIG1 (648 aa).

Residues S20–S51 show a composition bias toward low complexity. The tract at residues S20–G52 is disordered. Residues H201–T331 form the CBM21 domain. Polar residues predominate over residues R593–L609. The interval R593–S629 is disordered.

Its function is as follows. Regulates the activity of glycogen synthase. It is most probably a regulatory subunit for protein phosphatase type 1. This is Serine/threonine-protein phosphatase 1 regulatory subunit PIG1 (PIG1) from Saccharomyces cerevisiae (strain ATCC 204508 / S288c) (Baker's yeast).